Here is a 482-residue protein sequence, read N- to C-terminus: DNA polymerase II small subunit (482 aa).

Belongs to the DNA polymerase delta/II small subunit family. In terms of assembly, heterodimer of a large subunit and a small subunit.

It catalyses the reaction DNA(n) + a 2'-deoxyribonucleoside 5'-triphosphate = DNA(n+1) + diphosphate. The enzyme catalyses Exonucleolytic cleavage in the 3'- to 5'-direction to yield nucleoside 5'-phosphates.. Its function is as follows. Possesses two activities: a DNA synthesis (polymerase) and an exonucleolytic activity that degrades single-stranded DNA in the 3' to 5' direction. Has a template-primer preference which is characteristic of a replicative DNA polymerase. The protein is DNA polymerase II small subunit (polB) of Methanothermobacter thermautotrophicus (strain ATCC 29096 / DSM 1053 / JCM 10044 / NBRC 100330 / Delta H) (Methanobacterium thermoautotrophicum).